Consider the following 143-residue polypeptide: Crossover junction endodeoxyribonuclease Hjc (143 aa).

Residue Glu11 participates in Mg(2+) binding. Ser31 is an active-site residue. 2 residues coordinate Mg(2+): Asp41 and Glu54.

The protein belongs to the Holliday junction resolvase Hjc family. As to quaternary structure, homodimer. Mg(2+) is required as a cofactor.

It carries out the reaction Endonucleolytic cleavage at a junction such as a reciprocal single-stranded crossover between two homologous DNA duplexes (Holliday junction).. In terms of biological role, a structure-specific endonuclease that resolves Holliday junction (HJ) intermediates during genetic recombination. Cleaves 4-way DNA junctions introducing paired nicks in opposing strands, leaving a 5'-terminal phosphate and a 3'-terminal hydroxyl group that are ligated to produce recombinant products. Redundant function with Holliday junction resolvase Hje. The chain is Crossover junction endodeoxyribonuclease Hjc from Sulfolobus acidocaldarius (strain ATCC 33909 / DSM 639 / JCM 8929 / NBRC 15157 / NCIMB 11770).